The primary structure comprises 400 residues: Enolase (400 aa).

Gln154 serves as a coordination point for (2R)-2-phosphoglycerate. The active-site Proton donor is the Glu197. Residues Asp233, Glu274, and Asp301 each coordinate Mg(2+). Residues Lys326, Arg355, Ser356, and Lys377 each coordinate (2R)-2-phosphoglycerate. Lys326 (proton acceptor) is an active-site residue.

The protein belongs to the enolase family. Mg(2+) serves as cofactor.

It localises to the cytoplasm. Its subcellular location is the secreted. It is found in the cell surface. The catalysed reaction is (2R)-2-phosphoglycerate = phosphoenolpyruvate + H2O. It participates in carbohydrate degradation; glycolysis; pyruvate from D-glyceraldehyde 3-phosphate: step 4/5. Functionally, catalyzes the reversible conversion of 2-phosphoglycerate (2-PG) into phosphoenolpyruvate (PEP). It is essential for the degradation of carbohydrates via glycolysis. This is Enolase from Picrophilus torridus (strain ATCC 700027 / DSM 9790 / JCM 10055 / NBRC 100828 / KAW 2/3).